A 300-amino-acid polypeptide reads, in one-letter code: Dihydroorotate dehydrogenase B (NAD(+)), catalytic subunit (300 aa).

FMN contacts are provided by residues S21 and 45–46 (KS). Substrate contacts are provided by residues K45, 69–73 (NAVGL), and N125. N125 lines the FMN pocket. The active-site Nucleophile is the C128. Residues K163 and I187 each coordinate FMN. Position 188 to 189 (188 to 189 (NT)) interacts with substrate. FMN-binding positions include G213, 239–240 (GG), and 261–262 (GT).

It belongs to the dihydroorotate dehydrogenase family. Type 1 subfamily. In terms of assembly, heterotetramer of 2 PyrK and 2 PyrD type B subunits. FMN is required as a cofactor.

It localises to the cytoplasm. It catalyses the reaction (S)-dihydroorotate + NAD(+) = orotate + NADH + H(+). The protein operates within pyrimidine metabolism; UMP biosynthesis via de novo pathway; orotate from (S)-dihydroorotate (NAD(+) route): step 1/1. Catalyzes the conversion of dihydroorotate to orotate with NAD(+) as electron acceptor. This chain is Dihydroorotate dehydrogenase B (NAD(+)), catalytic subunit (pyrD), found in Thermoplasma acidophilum (strain ATCC 25905 / DSM 1728 / JCM 9062 / NBRC 15155 / AMRC-C165).